The chain runs to 172 residues: Disulfide bond formation protein B (172 aa).

At 1–16 the chain is on the cytoplasmic side; sequence MNLFASLNQFSKNRIS. A helical transmembrane segment spans residues 17–33; the sequence is WLLLLLFVVFFEGAALF. Topologically, residues 34–51 are periplasmic; sequence FQHVMMLSPCVMCIYERV. A disulfide bridge links Cys-43 with Cys-46. Residues 52 to 67 form a helical membrane-spanning segment; that stretch reads AMLGVGGAALFGLIAP. The Cytoplasmic portion of the chain corresponds to 68–74; that stretch reads NNPLVRW. The chain crosses the membrane as a helical span at residues 75–92; that stretch reads LGLAAWGASAYKGLALSL. Residues 93–147 are Periplasmic-facing; that stretch reads QHVDYQFNPSPFATCDLFVTFPDWAPLNQWAPWMFEAYGDCSKIVWQFMTLSMPQ. Cysteines 107 and 133 form a disulfide. The chain crosses the membrane as a helical span at residues 148–166; that stretch reads WLVIIFAGNLVALAFIVIA. Residues 167 to 172 lie on the Cytoplasmic side of the membrane; the sequence is QFFKSK.

The protein belongs to the DsbB family.

It localises to the cell inner membrane. Required for disulfide bond formation in some periplasmic proteins. Acts by oxidizing the DsbA protein. The sequence is that of Disulfide bond formation protein B from Vibrio vulnificus (strain CMCP6).